A 109-amino-acid chain; its full sequence is MAASELLKSRVENLRDYELVVILTTDTPKEKVEAILEGISKTIAEKEGSFTEVNHWGKRKLAYLIGRYVEGYYVFIKMKAKPSSIRKISTDLRISEQVIRHMAINMDEE.

This sequence belongs to the bacterial ribosomal protein bS6 family.

Its function is as follows. Binds together with bS18 to 16S ribosomal RNA. This is Small ribosomal subunit protein bS6 from Dehalococcoides mccartyi (strain CBDB1).